Here is a 314-residue protein sequence, read N- to C-terminus: Ribosomal protein L11 methyltransferase (314 aa).

The S-adenosyl-L-methionine site is built by Thr-152, Gly-184, Asp-206, and Asn-248.

Belongs to the methyltransferase superfamily. PrmA family.

The protein resides in the cytoplasm. It carries out the reaction L-lysyl-[protein] + 3 S-adenosyl-L-methionine = N(6),N(6),N(6)-trimethyl-L-lysyl-[protein] + 3 S-adenosyl-L-homocysteine + 3 H(+). Its function is as follows. Methylates ribosomal protein L11. The chain is Ribosomal protein L11 methyltransferase from Geotalea daltonii (strain DSM 22248 / JCM 15807 / FRC-32) (Geobacter daltonii).